The sequence spans 130 residues: S-adenosylmethionine decarboxylase proenzyme (130 aa).

Catalysis depends on S64, which acts as the Schiff-base intermediate with substrate; via pyruvic acid. Position 64 is a pyruvic acid (Ser); by autocatalysis (S64). H69 serves as the catalytic Proton acceptor; for processing activity. Catalysis depends on C84, which acts as the Proton donor; for catalytic activity.

The protein belongs to the prokaryotic AdoMetDC family. Type 1 subfamily. In terms of assembly, heterotetramer of two alpha and two beta chains arranged as a dimer of alpha/beta heterodimers. Pyruvate serves as cofactor. In terms of processing, is synthesized initially as an inactive proenzyme. Formation of the active enzyme involves a self-maturation process in which the active site pyruvoyl group is generated from an internal serine residue via an autocatalytic post-translational modification. Two non-identical subunits are generated from the proenzyme in this reaction, and the pyruvate is formed at the N-terminus of the alpha chain, which is derived from the carboxyl end of the proenzyme. The post-translation cleavage follows an unusual pathway, termed non-hydrolytic serinolysis, in which the side chain hydroxyl group of the serine supplies its oxygen atom to form the C-terminus of the beta chain, while the remainder of the serine residue undergoes an oxidative deamination to produce ammonia and the pyruvoyl group blocking the N-terminus of the alpha chain.

It catalyses the reaction S-adenosyl-L-methionine + H(+) = S-adenosyl 3-(methylsulfanyl)propylamine + CO2. Its pathway is amine and polyamine biosynthesis; S-adenosylmethioninamine biosynthesis; S-adenosylmethioninamine from S-adenosyl-L-methionine: step 1/1. Functionally, catalyzes the decarboxylation of S-adenosylmethionine to S-adenosylmethioninamine (dcAdoMet), the propylamine donor required for the synthesis of the polyamines spermine and spermidine from the diamine putrescine. The sequence is that of S-adenosylmethionine decarboxylase proenzyme from Thermoplasma volcanium (strain ATCC 51530 / DSM 4299 / JCM 9571 / NBRC 15438 / GSS1).